An 865-amino-acid polypeptide reads, in one-letter code: Leucine--tRNA ligase (865 aa).

Positions 58-68 (PYPSGNLHMGH) match the 'HIGH' region motif. The short motif at 629-633 (KMSKS) is the 'KMSKS' region element. K632 contributes to the ATP binding site.

The protein belongs to the class-I aminoacyl-tRNA synthetase family.

Its subcellular location is the cytoplasm. It catalyses the reaction tRNA(Leu) + L-leucine + ATP = L-leucyl-tRNA(Leu) + AMP + diphosphate. In Synechococcus elongatus (strain ATCC 33912 / PCC 7942 / FACHB-805) (Anacystis nidulans R2), this protein is Leucine--tRNA ligase.